Consider the following 787-residue polypeptide: Glutamine-dependent NAD(+) synthetase (787 aa).

Residues 5–275 enclose the CN hydrolase domain; the sequence is VTVAVSTLNQ…VEVTLATIDL (271 aa). Residue Glu45 is the Proton acceptor; for glutaminase activity of the active site. Lys114 serves as the catalytic For glutaminase activity. Residue Cys175 is the Nucleophile; for glutaminase activity of the active site. Positions 325 to 787 are ligase; that stretch reads MHTPEEEIAL…KIKDRTGIPV (463 aa). 355-362 provides a ligand contact to ATP; sequence PLSGGVDS. Ser357 is a catalytic residue. Ser703 bears the Phosphoserine mark.

In the C-terminal section; belongs to the NAD synthetase family.

The enzyme catalyses deamido-NAD(+) + L-glutamine + ATP + H2O = L-glutamate + AMP + diphosphate + NAD(+) + H(+). Its pathway is cofactor biosynthesis; NAD(+) biosynthesis; NAD(+) from deamido-NAD(+) (L-Gln route): step 1/1. In terms of biological role, catalyzes the ATP-dependent amidation of deamido-NAD to form NAD. Uses L-glutamine as a nitrogen source. Because of its role in energy metabolism, involved in the modulation of aged-related cardiac function, mobility, and lifespan. The protein is Glutamine-dependent NAD(+) synthetase of Drosophila melanogaster (Fruit fly).